Consider the following 148-residue polypeptide: Ubiquitin-conjugating enzyme E2 8 (148 aa).

The 147-residue stretch at 1–147 (MASKRILKEL…ARNWTQKYAM (147 aa)) folds into the UBC core domain. The Glycyl thioester intermediate role is filled by Cys-85.

This sequence belongs to the ubiquitin-conjugating enzyme family. In terms of assembly, interacts with CIP8, CHIP, NLA and XERICO. Highest expression in young stems, old leaves. Lowest levels in floral buds, anthers and young leaves.

It catalyses the reaction S-ubiquitinyl-[E1 ubiquitin-activating enzyme]-L-cysteine + [E2 ubiquitin-conjugating enzyme]-L-cysteine = [E1 ubiquitin-activating enzyme]-L-cysteine + S-ubiquitinyl-[E2 ubiquitin-conjugating enzyme]-L-cysteine.. Its pathway is protein modification; protein ubiquitination. Functionally, accepts the ubiquitin from the E1 complex and catalyzes its covalent attachment to other proteins. Mediates the selective degradation of short-lived and abnormal proteins. This Arabidopsis thaliana (Mouse-ear cress) protein is Ubiquitin-conjugating enzyme E2 8 (UBC8).